Reading from the N-terminus, the 222-residue chain is Phosphoribosylformylglycinamidine synthase subunit PurQ (222 aa).

A Glutamine amidotransferase type-1 domain is found at 2–222; it reads RTAVIQFPGS…FESLKGALVQ (221 aa). C87 serves as the catalytic Nucleophile. Residues H195 and E197 contribute to the active site.

Part of the FGAM synthase complex composed of 1 PurL, 1 PurQ and 2 PurS subunits.

The protein localises to the cytoplasm. The catalysed reaction is N(2)-formyl-N(1)-(5-phospho-beta-D-ribosyl)glycinamide + L-glutamine + ATP + H2O = 2-formamido-N(1)-(5-O-phospho-beta-D-ribosyl)acetamidine + L-glutamate + ADP + phosphate + H(+). It catalyses the reaction L-glutamine + H2O = L-glutamate + NH4(+). The protein operates within purine metabolism; IMP biosynthesis via de novo pathway; 5-amino-1-(5-phospho-D-ribosyl)imidazole from N(2)-formyl-N(1)-(5-phospho-D-ribosyl)glycinamide: step 1/2. Its function is as follows. Part of the phosphoribosylformylglycinamidine synthase complex involved in the purines biosynthetic pathway. Catalyzes the ATP-dependent conversion of formylglycinamide ribonucleotide (FGAR) and glutamine to yield formylglycinamidine ribonucleotide (FGAM) and glutamate. The FGAM synthase complex is composed of three subunits. PurQ produces an ammonia molecule by converting glutamine to glutamate. PurL transfers the ammonia molecule to FGAR to form FGAM in an ATP-dependent manner. PurS interacts with PurQ and PurL and is thought to assist in the transfer of the ammonia molecule from PurQ to PurL. This Deinococcus geothermalis (strain DSM 11300 / CIP 105573 / AG-3a) protein is Phosphoribosylformylglycinamidine synthase subunit PurQ.